The primary structure comprises 321 residues: Mas-related G-protein coupled receptor member D (321 aa).

Topologically, residues 1–8 (MNSTLDSS) are extracellular. Asn-2 carries an N-linked (GlcNAc...) asparagine glycan. The chain crosses the membrane as a helical span at residues 9 to 29 (PAPGLTISPTMDLVTWIYFSV). Thr-30 is a topological domain (cytoplasmic). The chain crosses the membrane as a helical span at residues 31–51 (FLAMATCVGGMAGNSLVIWLL). Over 52–72 (SCNGMQRSPFCVYVLNLAVAD) the chain is Extracellular. The chain crosses the membrane as a helical span at residues 73–93 (FLFLFCMASMLSLETGPLLIV). Residues 94 to 146 (NISAKIYEGMRRIKYFAYTAGLSLLTAISTQRCLSVLFPIWYKCHRPRHLSSV) lie on the Cytoplasmic side of the membrane. The chain crosses the membrane as a helical span at residues 147–167 (VSGALWALAFLMNFLASFFCV). Residues 168 to 181 (QFWHPNKHQCFKVD) are Extracellular-facing. A helical transmembrane segment spans residues 182–202 (IVFNSLILGIFMPVMILTSTI). At 203–220 (LFIRVRKNSLMQRRRPRR) the chain is on the cytoplasmic side. Residues 221–241 (LYVVILTSILVFLTCSLPLGI) form a helical membrane-spanning segment. At 242–260 (NWFLLYWVDVKRDVRLLYS) the chain is on the extracellular side. A helical membrane pass occupies residues 261–281 (CVSRFSSSLSSSANPVIYFLV). Topologically, residues 282–321 (GSQKSHRLQESLGAVLGRALRDEPEPEGRETPSTCTNDGV) are cytoplasmic. Positions 302 to 311 (RDEPEPEGRE) are enriched in basic and acidic residues. Residues 302 to 321 (RDEPEPEGRETPSTCTNDGV) are disordered. The span at 312–321 (TPSTCTNDGV) shows a compositional bias: polar residues.

This sequence belongs to the G-protein coupled receptor 1 family. Mas subfamily. As to expression, expressed in a subset of sensory neurons that includes nociceptors. Expressed in the subclass of non-peptidergic sensory neurons that are IB4(+) and VR1(-).

Its subcellular location is the cell membrane. May regulate nociceptor function and/or development, including the sensation or modulation of pain. Functions as a specific membrane receptor for beta-alanine. The receptor couples with G-protein G(q) and G(i). The protein is Mas-related G-protein coupled receptor member D (Mrgprd) of Mus musculus (Mouse).